Reading from the N-terminus, the 479-residue chain is Signal recognition particle subunit SRP54 1 (479 aa).

Positions 1–295 are G-domain; that stretch reads MVLAELGGRI…DVKPFVSRLL (295 aa). GTP contacts are provided by residues 108–115, 190–194, and 248–251; these read GLQGAGKT, DTSGR, and TKMD. The segment at 296–479 is M-domain; the sequence is GKGDWSGLVD…MMGMFGGGGK (184 aa).

It belongs to the GTP-binding SRP family. SRP54 subfamily. In terms of assembly, component of a signal recognition particle (SRP) complex that consists of a 7SL RNA molecule of 300 nucleotides and six protein subunits: SRP72, SRP68, SRP54, SRP19, SRP14 and SRP9.

It is found in the cytoplasm. The protein localises to the endoplasmic reticulum. The catalysed reaction is GTP + H2O = GDP + phosphate + H(+). Functionally, component of the signal recognition particle (SRP) complex, a ribonucleoprotein complex that mediates the cotranslational targeting of secretory and membrane proteins to the endoplasmic reticulum (ER). As part of the SRP complex, associates with the SRP receptor (SR) component SRPRA to target secretory proteins to the endoplasmic reticulum membrane. Binds to the signal sequence of presecretory proteins when they emerge from the ribosomes. Displays basal GTPase activity, and stimulates reciprocal GTPase activation of the SR subunit SRPRA. Forms a guanosine 5'-triphosphate (GTP)-dependent complex with the SR subunit SRPRA. SR compaction and GTPase mediated rearrangement of SR drive SRP-mediated cotranslational protein translocation into the ER. Requires the presence of SRP9/SRP14 and/or SRP19 to stably interact with RNA. The chain is Signal recognition particle subunit SRP54 1 (SRP-54A) from Arabidopsis thaliana (Mouse-ear cress).